Here is a 307-residue protein sequence, read N- to C-terminus: Acetaldehyde dehydrogenase 1 (307 aa).

Catalysis depends on cysteine 131, which acts as the Acyl-thioester intermediate. NAD(+)-binding positions include serine 162–asparagine 170 and asparagine 273.

It belongs to the acetaldehyde dehydrogenase family.

It catalyses the reaction acetaldehyde + NAD(+) + CoA = acetyl-CoA + NADH + H(+). The polypeptide is Acetaldehyde dehydrogenase 1 (salG) (Metapseudomonas furukawaii (Pseudomonas furukawaii)).